Reading from the N-terminus, the 117-residue chain is Large ribosomal subunit protein bL20 (117 aa).

This sequence belongs to the bacterial ribosomal protein bL20 family.

Its function is as follows. Binds directly to 23S ribosomal RNA and is necessary for the in vitro assembly process of the 50S ribosomal subunit. It is not involved in the protein synthesizing functions of that subunit. In Chromohalobacter salexigens (strain ATCC BAA-138 / DSM 3043 / CIP 106854 / NCIMB 13768 / 1H11), this protein is Large ribosomal subunit protein bL20.